A 529-amino-acid chain; its full sequence is Bifunctional purine biosynthesis protein PurH (529 aa).

Positions 1–148 (MQQRRPVRRA…KNHKDVAIVV (148 aa)) constitute an MGS-like domain.

The protein belongs to the PurH family.

It carries out the reaction (6R)-10-formyltetrahydrofolate + 5-amino-1-(5-phospho-beta-D-ribosyl)imidazole-4-carboxamide = 5-formamido-1-(5-phospho-D-ribosyl)imidazole-4-carboxamide + (6S)-5,6,7,8-tetrahydrofolate. It catalyses the reaction IMP + H2O = 5-formamido-1-(5-phospho-D-ribosyl)imidazole-4-carboxamide. It participates in purine metabolism; IMP biosynthesis via de novo pathway; 5-formamido-1-(5-phospho-D-ribosyl)imidazole-4-carboxamide from 5-amino-1-(5-phospho-D-ribosyl)imidazole-4-carboxamide (10-formyl THF route): step 1/1. The protein operates within purine metabolism; IMP biosynthesis via de novo pathway; IMP from 5-formamido-1-(5-phospho-D-ribosyl)imidazole-4-carboxamide: step 1/1. This Salmonella schwarzengrund (strain CVM19633) protein is Bifunctional purine biosynthesis protein PurH.